The following is a 491-amino-acid chain: Cytosol aminopeptidase (491 aa).

Lys-263 and Asp-268 together coordinate Mn(2+). The active site involves Lys-275. Mn(2+) contacts are provided by Asp-286, Asp-345, and Glu-347. Arg-349 is an active-site residue.

It belongs to the peptidase M17 family. It depends on Mn(2+) as a cofactor.

It is found in the cytoplasm. The catalysed reaction is Release of an N-terminal amino acid, Xaa-|-Yaa-, in which Xaa is preferably Leu, but may be other amino acids including Pro although not Arg or Lys, and Yaa may be Pro. Amino acid amides and methyl esters are also readily hydrolyzed, but rates on arylamides are exceedingly low.. It catalyses the reaction Release of an N-terminal amino acid, preferentially leucine, but not glutamic or aspartic acids.. Functionally, presumably involved in the processing and regular turnover of intracellular proteins. Catalyzes the removal of unsubstituted N-terminal amino acids from various peptides. The sequence is that of Cytosol aminopeptidase (pepA) from Haemophilus influenzae (strain ATCC 51907 / DSM 11121 / KW20 / Rd).